The chain runs to 263 residues: Indole-3-glycerol phosphate synthase (263 aa).

Belongs to the TrpC family.

It catalyses the reaction 1-(2-carboxyphenylamino)-1-deoxy-D-ribulose 5-phosphate + H(+) = (1S,2R)-1-C-(indol-3-yl)glycerol 3-phosphate + CO2 + H2O. It functions in the pathway amino-acid biosynthesis; L-tryptophan biosynthesis; L-tryptophan from chorismate: step 4/5. The chain is Indole-3-glycerol phosphate synthase from Polaromonas naphthalenivorans (strain CJ2).